The sequence spans 259 residues: Glycerol-3-phosphate acyltransferase (259 aa).

7 helical membrane-spanning segments follow: residues 11 to 31 (IILA…IIIV), 62 to 82 (LVVA…AILL), 93 to 112 (TSYF…PIYY), 124 to 144 (LGLL…VWFI), 152 to 172 (VSVA…IPYL), 188 to 208 (FSVA…HYWF), and 211 to 231 (IWAS…LILG).

It belongs to the PlsY family. Probably interacts with PlsX.

It localises to the cell membrane. The enzyme catalyses an acyl phosphate + sn-glycerol 3-phosphate = a 1-acyl-sn-glycero-3-phosphate + phosphate. Its pathway is lipid metabolism; phospholipid metabolism. Its function is as follows. Catalyzes the transfer of an acyl group from acyl-phosphate (acyl-PO(4)) to glycerol-3-phosphate (G3P) to form lysophosphatidic acid (LPA). This enzyme utilizes acyl-phosphate as fatty acyl donor, but not acyl-CoA or acyl-ACP. The sequence is that of Glycerol-3-phosphate acyltransferase from Mycoplasma capricolum subsp. capricolum (strain California kid / ATCC 27343 / NCTC 10154).